The following is a 290-amino-acid chain: Sodium/potassium-transporting ATPase subunit beta-2 (290 aa).

At 1-39 (MVIQKEKKSCGQVVEEWKEFVWNPRTHQFMGRTGTSWAF) the chain is on the cytoplasmic side. The chain crosses the membrane as a helical; Signal-anchor for type II membrane protein span at residues 40-67 (ILLFYLVFYGFLTAMFTLTMWVMLQTVS). Over 68–290 (DHTPKYQDRL…VAFKLRINKT (223 aa)) the chain is Extracellular. N-linked (GlcNAc...) asparagine glycans are attached at residues Asn-96 and Asn-118. Cysteines 129 and 150 form a disulfide. Asn-153 carries N-linked (GlcNAc...) asparagine glycosylation. A disulfide bridge connects residues Cys-160 and Cys-177. Asn-193, Asn-197, and Asn-238 each carry an N-linked (GlcNAc...) asparagine glycan. Residues 193-289 (NQSMNVTCVG…RVAFKLRINK (97 aa)) are immunoglobulin-like. Cys-200 and Cys-261 are oxidised to a cystine.

It belongs to the X(+)/potassium ATPases subunit beta family. In terms of assembly, the sodium/potassium-transporting ATPase is composed of a catalytic alpha subunit, an auxiliary non-catalytic beta subunit and an additional regulatory subunit. Interacts with BSG.

The protein localises to the cell membrane. Functionally, this is the non-catalytic component of the active enzyme, which catalyzes the hydrolysis of ATP coupled with the exchange of Na(+) and K(+) ions across the plasma membrane. The exact function of the beta-2 subunit is not known. Mediates cell adhesion of neurons and astrocytes, and promotes neurite outgrowth. This is Sodium/potassium-transporting ATPase subunit beta-2 (ATP1B2) from Bos taurus (Bovine).